A 175-amino-acid polypeptide reads, in one-letter code: B9 domain-containing protein 2 (175 aa).

One can recognise a C2 B9-type domain in the interval 2 to 118 (AEVHVIGQII…ACPTWRPLGS (117 aa)).

It belongs to the B9D family. As to quaternary structure, part of the tectonic-like complex (also named B9 complex). Interacts with TUBG1.

The protein resides in the cytoplasm. Its subcellular location is the cytoskeleton. It localises to the cilium basal body. The protein localises to the cilium axoneme. It is found in the nucleus. Component of the tectonic-like complex, a complex localized at the transition zone of primary cilia and acting as a barrier that prevents diffusion of transmembrane proteins between the cilia and plasma membranes. This is B9 domain-containing protein 2 (B9D2) from Homo sapiens (Human).